Here is a 504-residue protein sequence, read N- to C-terminus: Maturase K (504 aa).

The protein belongs to the intron maturase 2 family. MatK subfamily.

Its subcellular location is the plastid. It localises to the chloroplast. In terms of biological role, usually encoded in the trnK tRNA gene intron. Probably assists in splicing its own and other chloroplast group II introns. This chain is Maturase K, found in Nepenthes alata (Winged pitcher plant).